Here is a 259-residue protein sequence, read N- to C-terminus: Putative carbamate hydrolase RutD (259 aa).

It belongs to the AB hydrolase superfamily. Hydrolase RutD family.

The enzyme catalyses carbamate + 2 H(+) = NH4(+) + CO2. Its function is as follows. Involved in pyrimidine catabolism. May facilitate the hydrolysis of carbamate, a reaction that can also occur spontaneously. This is Putative carbamate hydrolase RutD from Pseudomonas syringae pv. syringae (strain B728a).